Consider the following 92-residue polypeptide: Small ribosomal subunit protein uS19c (92 aa).

The protein belongs to the universal ribosomal protein uS19 family.

The protein localises to the plastid. Protein S19 forms a complex with S13 that binds strongly to the 16S ribosomal RNA. This chain is Small ribosomal subunit protein uS19c, found in Cuscuta reflexa (Southern Asian dodder).